Reading from the N-terminus, the 216-residue chain is Maleylacetoacetate isomerase (216 aa).

Position 1 is an N-acetylmethionine (Met1). The GST N-terminal domain maps to Gly4 to Arg87. Residues Ser14 to Arg19 and Gln45 each bind glutathione. Lys57 is subject to N6-succinyllysine. Residues Val59, Gln71–Ser72, Gln111, and Asn115–Ser117 each bind glutathione. The 121-residue stretch at Asp92–Ala212 folds into the GST C-terminal domain. The residue at position 136 (Thr136) is a Phosphothreonine. At Ser137 the chain carries Phosphoserine. At Lys177 the chain carries N6-succinyllysine. Ser181 is subject to Phosphoserine.

This sequence belongs to the GST superfamily. Zeta family. In terms of assembly, homodimer. Requires glutathione as cofactor. As to expression, expressed in liver, kidney, seminal glands and breast.

The protein localises to the cytoplasm. It catalyses the reaction 4-maleylacetoacetate = 4-fumarylacetoacetate. The catalysed reaction is RX + glutathione = an S-substituted glutathione + a halide anion + H(+). It functions in the pathway amino-acid degradation; L-phenylalanine degradation; acetoacetate and fumarate from L-phenylalanine: step 5/6. Its function is as follows. Probable bifunctional enzyme showing minimal glutathione-conjugating activity with ethacrynic acid and 7-chloro-4-nitrobenz-2-oxa-1, 3-diazole and maleylacetoacetate isomerase activity. Also has low glutathione peroxidase activity with t-butyl and cumene hydroperoxides. Is able to catalyze the glutathione dependent oxygenation of dichloroacetic acid to glyoxylic acid. The polypeptide is Maleylacetoacetate isomerase (Gstz1) (Mus musculus (Mouse)).